We begin with the raw amino-acid sequence, 119 residues long: Small ribosomal subunit protein bS16 (119 aa).

It belongs to the bacterial ribosomal protein bS16 family.

This chain is Small ribosomal subunit protein bS16, found in Chlamydia caviae (strain ATCC VR-813 / DSM 19441 / 03DC25 / GPIC) (Chlamydophila caviae).